Here is a 379-residue protein sequence, read N- to C-terminus: Probable pectin lyase A (379 aa).

Residues 1-19 (MKFALLSGVAAGLLPVVSA) form the signal peptide. 2 disulfides stabilise this stretch: Cys82–Cys101 and Cys91–Cys225. Arg255 is an active-site residue. Cys322 and Cys330 are disulfide-bonded.

It belongs to the polysaccharide lyase 1 family.

It is found in the secreted. The enzyme catalyses Eliminative cleavage of (1-&gt;4)-alpha-D-galacturonan methyl ester to give oligosaccharides with 4-deoxy-6-O-methyl-alpha-D-galact-4-enuronosyl groups at their non-reducing ends.. Its function is as follows. Pectinolytic enzymes consist of four classes of enzymes: pectin lyase, polygalacturonase, pectin methylesterase and rhamnogalacturonase. Among pectinolytic enzymes, pectin lyase is the most important in depolymerization of pectin, since it cleaves internal glycosidic bonds of highly methylated pectins. This Aspergillus oryzae (strain ATCC 42149 / RIB 40) (Yellow koji mold) protein is Probable pectin lyase A (pelA).